Consider the following 100-residue polypeptide: Small ribosomal subunit protein uS14 (100 aa).

This sequence belongs to the universal ribosomal protein uS14 family. As to quaternary structure, part of the 30S ribosomal subunit. Contacts proteins S3 and S10.

In terms of biological role, binds 16S rRNA, required for the assembly of 30S particles and may also be responsible for determining the conformation of the 16S rRNA at the A site. In Gloeothece citriformis (strain PCC 7424) (Cyanothece sp. (strain PCC 7424)), this protein is Small ribosomal subunit protein uS14.